The sequence spans 274 residues: Methylamine utilization protein MauF (274 aa).

The next 7 membrane-spanning stretches (helical) occupy residues 30–50 (WTRALILAASAAGGGAAALAM), 52–72 (AAHVALVLGLAAFAGGLLSTW), 105–125 (LGYALGALILGTLLGAIGGIA), 127–147 (LSGFATSFGLGLLAVIGLAYG), 176–196 (WVVGGLYGLSLGLDYLTYVQT), 202–222 (VTAAAVLSGNVAEAVALIAIF), and 253–273 (AAIADGAILTAVGAAFAMLAL).

Its subcellular location is the cell membrane. The protein operates within one-carbon metabolism; methylamine degradation. The polypeptide is Methylamine utilization protein MauF (mauF) (Paracoccus versutus (Thiobacillus versutus)).